Reading from the N-terminus, the 580-residue chain is Formate--tetrahydrofolate ligase (580 aa).

65–72 provides a ligand contact to ATP; sequence TPHGEGKT.

The protein belongs to the formate--tetrahydrofolate ligase family.

The enzyme catalyses (6S)-5,6,7,8-tetrahydrofolate + formate + ATP = (6R)-10-formyltetrahydrofolate + ADP + phosphate. Its pathway is one-carbon metabolism; tetrahydrofolate interconversion. The protein is Formate--tetrahydrofolate ligase of Shewanella baltica (strain OS223).